Reading from the N-terminus, the 346-residue chain is Biotin synthase (346 aa).

A Radical SAM core domain is found at 40 to 264 (NEVQVSTLLS…MMPHSHVRLS (225 aa)). [4Fe-4S] cluster is bound by residues cysteine 55, cysteine 59, and cysteine 62. Cysteine 99, cysteine 130, cysteine 190, and arginine 262 together coordinate [2Fe-2S] cluster.

This sequence belongs to the radical SAM superfamily. Biotin synthase family. As to quaternary structure, homodimer. The cofactor is [4Fe-4S] cluster. [2Fe-2S] cluster serves as cofactor.

It carries out the reaction (4R,5S)-dethiobiotin + (sulfur carrier)-SH + 2 reduced [2Fe-2S]-[ferredoxin] + 2 S-adenosyl-L-methionine = (sulfur carrier)-H + biotin + 2 5'-deoxyadenosine + 2 L-methionine + 2 oxidized [2Fe-2S]-[ferredoxin]. It participates in cofactor biosynthesis; biotin biosynthesis; biotin from 7,8-diaminononanoate: step 2/2. Catalyzes the conversion of dethiobiotin (DTB) to biotin by the insertion of a sulfur atom into dethiobiotin via a radical-based mechanism. The polypeptide is Biotin synthase (Colwellia psychrerythraea (strain 34H / ATCC BAA-681) (Vibrio psychroerythus)).